Here is a 404-residue protein sequence, read N- to C-terminus: Glucose-1-phosphate adenylyltransferase (404 aa).

Alpha-D-glucose 1-phosphate contacts are provided by residues Tyr-99, Gly-164, 179–180 (EK), and Ser-197.

The protein belongs to the bacterial/plant glucose-1-phosphate adenylyltransferase family.

It catalyses the reaction alpha-D-glucose 1-phosphate + ATP + H(+) = ADP-alpha-D-glucose + diphosphate. It participates in glycan biosynthesis; glycogen biosynthesis. Its function is as follows. Involved in the biosynthesis of ADP-glucose, a building block, required in the biosynthesis of maltose-1-phosphate (M1P) and in the elongation reactions to produce linear alpha-1,4-glucans. Catalyzes the reaction between ATP and alpha-D-glucose 1-phosphate (G1P) to produce pyrophosphate and ADP-Glc. In Mycolicibacterium vanbaalenii (strain DSM 7251 / JCM 13017 / BCRC 16820 / KCTC 9966 / NRRL B-24157 / PYR-1) (Mycobacterium vanbaalenii), this protein is Glucose-1-phosphate adenylyltransferase.